We begin with the raw amino-acid sequence, 225 residues long: Phosphoribosylformylglycinamidine synthase subunit PurQ (225 aa).

Residues 4 to 225 (RVGVITFPGT…YSVLDSVISA (222 aa)) form the Glutamine amidotransferase type-1 domain. Residue Cys87 is the Nucleophile of the active site. Catalysis depends on residues His196 and Glu198.

Part of the FGAM synthase complex composed of 1 PurL, 1 PurQ and 2 PurS subunits.

The protein resides in the cytoplasm. It catalyses the reaction N(2)-formyl-N(1)-(5-phospho-beta-D-ribosyl)glycinamide + L-glutamine + ATP + H2O = 2-formamido-N(1)-(5-O-phospho-beta-D-ribosyl)acetamidine + L-glutamate + ADP + phosphate + H(+). The catalysed reaction is L-glutamine + H2O = L-glutamate + NH4(+). It participates in purine metabolism; IMP biosynthesis via de novo pathway; 5-amino-1-(5-phospho-D-ribosyl)imidazole from N(2)-formyl-N(1)-(5-phospho-D-ribosyl)glycinamide: step 1/2. In terms of biological role, part of the phosphoribosylformylglycinamidine synthase complex involved in the purines biosynthetic pathway. Catalyzes the ATP-dependent conversion of formylglycinamide ribonucleotide (FGAR) and glutamine to yield formylglycinamidine ribonucleotide (FGAM) and glutamate. The FGAM synthase complex is composed of three subunits. PurQ produces an ammonia molecule by converting glutamine to glutamate. PurL transfers the ammonia molecule to FGAR to form FGAM in an ATP-dependent manner. PurS interacts with PurQ and PurL and is thought to assist in the transfer of the ammonia molecule from PurQ to PurL. The sequence is that of Phosphoribosylformylglycinamidine synthase subunit PurQ from Rhodococcus jostii (strain RHA1).